Here is a 303-residue protein sequence, read N- to C-terminus: Cytosolic Fe-S cluster assembly factor CFD1 (303 aa).

15 to 22 (GKGGVGKS) is an ATP binding site. Positions 199 and 202 each coordinate [4Fe-4S] cluster.

Belongs to the Mrp/NBP35 ATP-binding proteins family. NUBP2/CFD1 subfamily. In terms of assembly, heterotetramer of 2 NBP35 and 2 CFD1 chains. Requires [4Fe-4S] cluster as cofactor.

The protein localises to the cytoplasm. Functionally, component of the cytosolic iron-sulfur (Fe/S) protein assembly (CIA) machinery. Required for maturation of extramitochondrial Fe-S proteins. The NBP35-CFD1 heterotetramer forms a Fe-S scaffold complex, mediating the de novo assembly of an Fe-S cluster and its transfer to target apoproteins. This Chaetomium globosum (strain ATCC 6205 / CBS 148.51 / DSM 1962 / NBRC 6347 / NRRL 1970) (Soil fungus) protein is Cytosolic Fe-S cluster assembly factor CFD1.